Consider the following 127-residue polypeptide: DNA-directed RNA polymerase subunit omega (127 aa).

The protein belongs to the RNA polymerase subunit omega family. As to quaternary structure, the RNAP catalytic core consists of 2 alpha, 1 beta, 1 beta' and 1 omega subunit. When a sigma factor is associated with the core the holoenzyme is formed, which can initiate transcription.

It catalyses the reaction RNA(n) + a ribonucleoside 5'-triphosphate = RNA(n+1) + diphosphate. Promotes RNA polymerase assembly. Latches the N- and C-terminal regions of the beta' subunit thereby facilitating its interaction with the beta and alpha subunits. This is DNA-directed RNA polymerase subunit omega from Rickettsia peacockii (strain Rustic).